Reading from the N-terminus, the 422-residue chain is Tyrosine--tRNA ligase (422 aa).

Tyr-37 lines the L-tyrosine pocket. Residues Pro-42–His-51 carry the 'HIGH' region motif. L-tyrosine contacts are provided by Tyr-175 and Gln-179. The short motif at Lys-235 to Thr-239 is the 'KMSKS' region element. Lys-238 serves as a coordination point for ATP. The S4 RNA-binding domain maps to Lys-357–Lys-414.

The protein belongs to the class-I aminoacyl-tRNA synthetase family. TyrS type 1 subfamily. As to quaternary structure, homodimer.

It localises to the cytoplasm. It carries out the reaction tRNA(Tyr) + L-tyrosine + ATP = L-tyrosyl-tRNA(Tyr) + AMP + diphosphate + H(+). In terms of biological role, catalyzes the attachment of tyrosine to tRNA(Tyr) in a two-step reaction: tyrosine is first activated by ATP to form Tyr-AMP and then transferred to the acceptor end of tRNA(Tyr). This chain is Tyrosine--tRNA ligase, found in Buchnera aphidicola subsp. Acyrthosiphon pisum (strain APS) (Acyrthosiphon pisum symbiotic bacterium).